A 442-amino-acid chain; its full sequence is Small RNA 2'-O-methyltransferase (442 aa).

Residues G125 and D151 each contribute to the S-adenosyl-L-methionine site. Mg(2+) contacts are provided by E209, E212, H213, and H260.

Belongs to the methyltransferase superfamily. HEN1 family. The cofactor is Mg(2+). As to expression, broadly expressed in the germline and somatic tissues in both hermaphrodites and males.

The protein resides in the cytoplasm. It localises to the nucleus. Its subcellular location is the nucleoplasm. It is found in the cytoplasmic granule. It carries out the reaction small RNA 3'-end nucleotide + S-adenosyl-L-methionine = small RNA 3'-end 2'-O-methylnucleotide + S-adenosyl-L-homocysteine + H(+). Functionally, methyltransferase that adds a 2'-O-methyl group at the 3'-end of PIWI-interacting RNAs (piRNAs) and small interfering RNAs (siRNAs) which are classes of regulatory RNAs that are involved in gene silencing in endogenous RNA interference (RNAi) pathways. Methylation protects the 3'-end of small RNAs from tailing and trimming and could constitute a recognition signal for appropriate argonaute machineries. Methylates and stabilizes 26G-siRNAs (a class of 26 nucleotide siRNAs that possess a monophosphorylated guanine residue at the 5'-end) when they are bound by argonaute protein ergo-1. This occurs in the female germline and embryo, but not in the male germline. Does not methylate 26G-siRNAs bound by argonaute proteins alg-3 or alg-4. Methylates and stabilizes 21U-piRNAs, which are a class of 21 nucleotide piRNAs that possess a uracil residue at the 5'-end, in the male and female germline. In addition, may play a role in exogenous RNAi (exoRNAi) pathways in the germline. This Caenorhabditis elegans protein is Small RNA 2'-O-methyltransferase.